Consider the following 64-residue polypeptide: Cytochrome c oxidase subunit 9, mitochondrial (64 aa).

At methionine 1 to arginine 15 the chain is on the mitochondrial matrix side. The helical transmembrane segment at glycine 16–tryptophan 36 threads the bilayer. Over tyrosine 37–alanine 64 the chain is Mitochondrial intermembrane.

It belongs to the fungal cytochrome c oxidase subunit 7a family. As to quaternary structure, component of the cytochrome c oxidase (complex IV, CIV), a multisubunit enzyme composed of 11 subunits. The complex is composed of a catalytic core of 3 subunits Cox1, Cox2 and Cox3, encoded in the mitochondrial DNA, and 8 supernumerary subunits Cox4, Cox5a/Cox5, Cox6, Cox7, Cox8, Cox7a/Cox9, Cox6b/Cox12 and Cox6a/Cox13, which are encoded in the nuclear genome. The complex exists as a monomer or a dimer and forms respiratory supercomplexes (SCs) in the inner mitochondrial membrane with NADH-ubiquinone oxidoreductase (complex I, CI) and ubiquinol-cytochrome c oxidoreductase (cytochrome b-c1 complex, complex III, CIII), resulting in various different assemblies (supercomplexes I(1)IV(1), I(1)III(3)IV(2), III(2)IV(1) and III(2)IV(2) as well as larger supercomplexes of compositions like I(1)III(2)IV(5-6)).

It is found in the mitochondrion inner membrane. It functions in the pathway energy metabolism; oxidative phosphorylation. Component of the cytochrome c oxidase, the last enzyme in the mitochondrial electron transport chain which drives oxidative phosphorylation. The respiratory chain contains 3 multisubunit complexes succinate dehydrogenase (complex II, CII), ubiquinol-cytochrome c oxidoreductase (cytochrome b-c1 complex, complex III, CIII) and cytochrome c oxidase (complex IV, CIV), that cooperate to transfer electrons derived from NADH and succinate to molecular oxygen, creating an electrochemical gradient over the inner membrane that drives transmembrane transport and the ATP synthase. Cytochrome c oxidase is the component of the respiratory chain that catalyzes the reduction of oxygen to water. Electrons originating from reduced cytochrome c in the intermembrane space (IMS) are transferred via the dinuclear copper A center (CU(A)) of Cox2 and heme A of Cox1 to the active site in Cox1, a binuclear center (BNC) formed by heme A3 and copper B (CU(B)). The BNC reduces molecular oxygen to 2 water molecules using 4 electrons from cytochrome c in the IMS and 4 protons from the mitochondrial matrix. The polypeptide is Cytochrome c oxidase subunit 9, mitochondrial (cox-17) (Neurospora crassa (strain ATCC 24698 / 74-OR23-1A / CBS 708.71 / DSM 1257 / FGSC 987)).